Consider the following 539-residue polypeptide: Chaperonin GroEL 1 (539 aa).

ATP-binding positions include Thr29–Pro32, Asp86–Thr90, Gly413, and Asp495.

It belongs to the chaperonin (HSP60) family. As to quaternary structure, forms a cylinder of 14 subunits composed of two heptameric rings stacked back-to-back. Interacts with the co-chaperonin GroES.

It localises to the cytoplasm. The catalysed reaction is ATP + H2O + a folded polypeptide = ADP + phosphate + an unfolded polypeptide.. Together with its co-chaperonin GroES, plays an essential role in assisting protein folding. The GroEL-GroES system forms a nano-cage that allows encapsulation of the non-native substrate proteins and provides a physical environment optimized to promote and accelerate protein folding. In Mycobacterium bovis (strain ATCC BAA-935 / AF2122/97), this protein is Chaperonin GroEL 1.